Reading from the N-terminus, the 686-residue chain is U-box domain-containing protein 19 (686 aa).

Positions 277 to 351 constitute a U-box domain; sequence LNVDDLRCPI…QSYSKQNGVV (75 aa). 5 ARM repeats span residues 406-445, 448-489, 491-533, 536-577, and 579-620; these read TFYR…NLSK, AGKT…YLSS, GDYS…SLLM, PDNH…KMAE, and PDGM…NLCH.

The catalysed reaction is S-ubiquitinyl-[E2 ubiquitin-conjugating enzyme]-L-cysteine + [acceptor protein]-L-lysine = [E2 ubiquitin-conjugating enzyme]-L-cysteine + N(6)-ubiquitinyl-[acceptor protein]-L-lysine.. Its pathway is protein modification; protein ubiquitination. Functionally, functions as an E3 ubiquitin ligase. The protein is U-box domain-containing protein 19 (PUB19) of Arabidopsis thaliana (Mouse-ear cress).